We begin with the raw amino-acid sequence, 107 residues long: Nitrogenase-stabilizing/protective protein NifW (107 aa).

Belongs to the NifW family. Homotrimer; associates with NifD.

May protect the nitrogenase Fe-Mo protein from oxidative damage. The sequence is that of Nitrogenase-stabilizing/protective protein NifW from Gloeothece citriformis (strain PCC 7424) (Cyanothece sp. (strain PCC 7424)).